A 953-amino-acid polypeptide reads, in one-letter code: Coatomer subunit beta (953 aa).

Thr2 is modified (N-acetylthreonine). HEAT repeat units follow at residues 96-131 (HEMI…KEAE), 132-168 (LLEP…NFEH), 240-276 (SERA…SAPT), 277-314 (AIKA…HPAH), 316-353 (RVLQ…SRNV), and 396-433 (DMAA…RFDN). N6-acetyllysine is present on Lys494.

Oligomeric complex that consists of at least the alpha, beta, beta', gamma, delta, epsilon and zeta subunits. Interacts with CAPN8. Interacts with SCYL1 and PRKCE. Interacts with COPG1. Interacts with ARF1 (myristoylated); this interaction is required for binding of COPB1 to Golgi membranes. Interacts (via trunk domain) with ARF1 (via switch I region); the interaction is direct. Interacts with KCNK2 (via N-terminus); this interaction increases the channel-mediated whole cell currents and promotes plasma membrane expression of KCNK2. Interacts with STX17. Interacts with TMEM115. Interacts with TMEM41B. In terms of processing, proteolytically cleaved between Ser-528 and Ser-529 by CAPN8. In terms of tissue distribution, predominantly expressed in the upper one-third of the oxyntic mucosa and in most regions of the pyloric mucosa. Ubiquitously expressed including platelet, liver, heart, spleen, lung and kidney.

The protein localises to the cytoplasm. It is found in the golgi apparatus membrane. The protein resides in the cytoplasmic vesicle. It localises to the COPI-coated vesicle membrane. Its subcellular location is the cell membrane. The protein localises to the endoplasmic reticulum-Golgi intermediate compartment. Its function is as follows. The coatomer is a cytosolic protein complex that binds to dilysine motifs and reversibly associates with Golgi non-clathrin-coated vesicles, which further mediate biosynthetic protein transport from the ER, via the Golgi up to the trans Golgi network. Coatomer complex is required for budding from Golgi membranes, and is essential for the retrograde Golgi-to-ER transport of dilysine-tagged proteins. In mammals, the coatomer can only be recruited by membranes associated to ADP-ribosylation factors (ARFs), which are small GTP-binding proteins; the complex also influences the Golgi structural integrity, as well as the processing, activity, and endocytic recycling of LDL receptors. Involved in the Golgi disassembly and reassembly processes during cell cycle. Involved in autophagy by playing a role in early endosome function. Plays a role in organellar compartmentalization of secretory compartments including endoplasmic reticulum (ER)-Golgi intermediate compartment (ERGIC), Golgi, trans-Golgi network (TGN) and recycling endosomes, and in biosynthetic transport of CAV1. Plays a functional role in facilitating the transport of kappa-type opioid receptor mRNAs into axons and enhances translation of these proteins in cortical neurons. Required for limiting lipid storage in lipid droplets. Involved in lipid homeostasis by regulating the presence of perilipin family members PLIN2 and PLIN3 at the lipid droplet surface and promoting the association of adipocyte triglyceride lipase (PNPLA2) with the lipid droplet surface to mediate lipolysis. The protein is Coatomer subunit beta (Copb1) of Mus musculus (Mouse).